Reading from the N-terminus, the 296-residue chain is Ribonuclease HIII (296 aa).

Residues 80 to 296 (LALIGSDEVG…NTKKAYQRLK (217 aa)) form the RNase H type-2 domain. D86, E87, and D191 together coordinate a divalent metal cation.

This sequence belongs to the RNase HII family. RnhC subfamily. Mn(2+) serves as cofactor. The cofactor is Mg(2+).

The protein localises to the cytoplasm. It carries out the reaction Endonucleolytic cleavage to 5'-phosphomonoester.. Functionally, endonuclease that specifically degrades the RNA of RNA-DNA hybrids. The sequence is that of Ribonuclease HIII from Streptococcus thermophilus (strain ATCC BAA-250 / LMG 18311).